A 101-amino-acid chain; its full sequence is Small ribosomal subunit protein uS14 (101 aa).

This sequence belongs to the universal ribosomal protein uS14 family. In terms of assembly, part of the 30S ribosomal subunit. Contacts proteins S3 and S10.

Binds 16S rRNA, required for the assembly of 30S particles and may also be responsible for determining the conformation of the 16S rRNA at the A site. The chain is Small ribosomal subunit protein uS14 from Pseudoalteromonas atlantica (strain T6c / ATCC BAA-1087).